The sequence spans 394 residues: Glycerol-3-phosphate dehydrogenase [NAD(+)] 2 (394 aa).

NAD(+)-binding positions include 41 to 46, Lys-152, and Ala-185; that span reads GSGNWG. Lys-152 provides a ligand contact to substrate. The Proton acceptor role is filled by Lys-243. NAD(+) contacts are provided by Arg-308 and Gln-337. Residue 308 to 309 participates in substrate binding; the sequence is RN.

It belongs to the NAD-dependent glycerol-3-phosphate dehydrogenase family.

It catalyses the reaction sn-glycerol 3-phosphate + NAD(+) = dihydroxyacetone phosphate + NADH + H(+). The polypeptide is Glycerol-3-phosphate dehydrogenase [NAD(+)] 2 (gpd2) (Cyberlindnera jadinii (Torula yeast)).